Reading from the N-terminus, the 364-residue chain is 4-hydroxy-3-methylbut-2-en-1-yl diphosphate synthase (flavodoxin) (364 aa).

4 residues coordinate [4Fe-4S] cluster: C268, C271, C303, and E310.

This sequence belongs to the IspG family. [4Fe-4S] cluster serves as cofactor.

It catalyses the reaction (2E)-4-hydroxy-3-methylbut-2-enyl diphosphate + oxidized [flavodoxin] + H2O + 2 H(+) = 2-C-methyl-D-erythritol 2,4-cyclic diphosphate + reduced [flavodoxin]. It functions in the pathway isoprenoid biosynthesis; isopentenyl diphosphate biosynthesis via DXP pathway; isopentenyl diphosphate from 1-deoxy-D-xylulose 5-phosphate: step 5/6. Functionally, converts 2C-methyl-D-erythritol 2,4-cyclodiphosphate (ME-2,4cPP) into 1-hydroxy-2-methyl-2-(E)-butenyl 4-diphosphate. In Desulfotalea psychrophila (strain LSv54 / DSM 12343), this protein is 4-hydroxy-3-methylbut-2-en-1-yl diphosphate synthase (flavodoxin).